Consider the following 101-residue polypeptide: Small ribosomal subunit protein uS14 (101 aa).

Belongs to the universal ribosomal protein uS14 family. As to quaternary structure, part of the 30S ribosomal subunit. Contacts proteins S3 and S10.

In terms of biological role, binds 16S rRNA, required for the assembly of 30S particles and may also be responsible for determining the conformation of the 16S rRNA at the A site. This is Small ribosomal subunit protein uS14 from Pseudomonas aeruginosa (strain LESB58).